Reading from the N-terminus, the 75-residue chain is Translation initiation factor IF-1, chloroplastic (75 aa).

Belongs to the IF-1 family. In terms of assembly, component of the 30S ribosomal translation pre-initiation complex which assembles on the 30S ribosome in the order IF-2 and IF-3, IF-1 and N-formylmethionyl-tRNA(fMet); mRNA recruitment can occur at any time during PIC assembly.

It is found in the plastid. The protein resides in the chloroplast. Functionally, one of the essential components for the initiation of protein synthesis. Stabilizes the binding of IF-2 and IF-3 on the 30S subunit to which N-formylmethionyl-tRNA(fMet) subsequently binds. Helps modulate mRNA selection, yielding the 30S pre-initiation complex (PIC). Upon addition of the 50S ribosomal subunit IF-1, IF-2 and IF-3 are released leaving the mature 70S translation initiation complex. The sequence is that of Translation initiation factor IF-1, chloroplastic (infA) from Cucumis sativus (Cucumber).